The following is a 599-amino-acid chain: MTKDELKALGWDRCDVVIVSGDAYVDHPSFGVAIIGRVLEKAGFRVGIIAQPDVTDKTSFSRLGEPRLCFCVTSGNVDSMVNNYTANKRLRSDDDYSPGNRPHMRPDRAVTVYCNKIRETYKTIPIITGGLEASLRRFAHYDYWDDKVRQSILADAPADMIVYGMGEKTIVDVVGRLKNGERIADITDIRGTTYKTRKIGDLSDFIELPDFKAVSTDKRAFAEAFKTFYDEQDPYYGHTLVQRHPKTIIVQNPPALPLTTAEMDAIYDLPYTRYPHPSYKEDIPALRTVRFSITSHRGCFGGCAFCAITAHQGRMIQSRSQESILREIRALTKLPEFKGTISDIGGPTADMYMLGCSKRSTQGMCRDKLCLYPEPCPNLNKDHSRLITLLNEVRKVPGVKNVFIGSGIRYDLAMQDEQYLYHICRQNVSGQLKVAPEHVSRNVTDAMCKPSIEAYDKFVSKYREINKELGKEQYIIPYFISAHPGCTLKDAIQLAEYVRDMGYYVEQVQDFTPTPSTLSTCMYYTGYNPYTGQEVYVPKSVEERRMYRALLQYKNPENYDLVKKALISANRKDLIGYGQNCLIKPVRPAIYKKPGRRKP.

The region spanning 281-557 is the Radical SAM core domain; the sequence is EDIPALRTVR…RALLQYKNPE (277 aa). Residues C299, C303, and C306 each contribute to the [4Fe-4S] cluster site.

The protein belongs to the UPF0313 family. The cofactor is [4Fe-4S] cluster.

The chain is UPF0313 protein UNCMA_01890 from Methanocella arvoryzae (strain DSM 22066 / NBRC 105507 / MRE50).